A 289-amino-acid chain; its full sequence is Paired box protein 5 homolog (289 aa).

A DNA-binding region (paired) is located at residues 29–155 (SHTGVNQLGG…SSINRIVRNK (127 aa)). Positions 32–88 (GVNQLGGVFVNGRPLADTVRAQIVEMSQHGTRPCDISRQLKVSHGCVSKILGRYYST) are PAI subdomain. An RED subdomain region spans residues 107 to 155 (RVVECIAGYKRANPTMFAWEIRQKLIEDQICGEENVPSVSSINRIVRNK). Composition is skewed to low complexity over residues 166–179 (SVTS…SATS) and 189–198 (VQQHMQQSTS). Residues 166-198 (SVTSSAARPSSATSHHQRSPPRGVQQHMQQSTS) are disordered.

Its subcellular location is the nucleus. The protein localises to the chromosome. Its function is as follows. Transcription factor. Binds to specific DNA sequence motifs in regulatory elements, for example in the genes encoding transcription factor lin-48, apoptosis regulator ced-9 and neuropeptide-like protein nlp-2. Specifies cell fate, playing an essential role in embryonic and larval development. Involved in morphogenesis of the vulva and uterus in hermaphrodites and of the rectal epithelium of the tail in males. Plays multiple roles in the development of the egg-laying system, acting in both lin-3/EGF-pathway-dependent and -independent processes. Positively regulates expression of neuropeptide-like proteins nlp-2 and nlp-7 in uvl cells in an EGF-pathway-dependent manner. Involved in negatively modulating apoptosis in germline and somatic cells, acting in partial redundancy with transcription factor pax-2, probably by directly regulating transcription of ced-9. Positively regulates transcription of lin-48 in hindgut cells and functions in the development of the hindgut. The sequence is that of Paired box protein 5 homolog from Caenorhabditis elegans.